A 310-amino-acid polypeptide reads, in one-letter code: MGDNITSITEFLLLGFPVGPRIQMLLFGLFSLFYVFTLLGNGTILGLISLDSRLHAPMYFFLSHLAVVDIAYACNTVPRMLVNLLHPAKPISFAGRMMQTFLFSTFAVTECLLLVVMSYDLYVAICHPLRYLAIMTWRVCITLAVTSWTTGVLLSLIHLVLLLPLPFCRPQKIYHFFCEILAVLKLACADTHINENMVLAGAISGLVGPLSTIVVSYMCILCAILQIQSREVQRKAFCTCFSHLCVIGLFYGTAIIMYVGPRYGNPKEQKKYLLLFHSLFNPMLNPLICSLRNSEVKNTLKRVLGVERAL.

The Extracellular portion of the chain corresponds to 1–24 (MGDNITSITEFLLLGFPVGPRIQM). Residue Asn4 is glycosylated (N-linked (GlcNAc...) asparagine). A helical membrane pass occupies residues 25–48 (LLFGLFSLFYVFTLLGNGTILGLI). The Cytoplasmic segment spans residues 49 to 56 (SLDSRLHA). The chain crosses the membrane as a helical span at residues 57-78 (PMYFFLSHLAVVDIAYACNTVP). Residues 79-99 (RMLVNLLHPAKPISFAGRMMQ) are Extracellular-facing. The chain crosses the membrane as a helical span at residues 100–119 (TFLFSTFAVTECLLLVVMSY). Residues 120–138 (DLYVAICHPLRYLAIMTWR) lie on the Cytoplasmic side of the membrane. A helical transmembrane segment spans residues 139-157 (VCITLAVTSWTTGVLLSLI). Residues 158–194 (HLVLLLPLPFCRPQKIYHFFCEILAVLKLACADTHIN) lie on the Extracellular side of the membrane. The chain crosses the membrane as a helical span at residues 195–218 (ENMVLAGAISGLVGPLSTIVVSYM). The Cytoplasmic portion of the chain corresponds to 219–235 (CILCAILQIQSREVQRK). The helical transmembrane segment at 236–258 (AFCTCFSHLCVIGLFYGTAIIMY) threads the bilayer. Topologically, residues 259-271 (VGPRYGNPKEQKK) are extracellular. A helical membrane pass occupies residues 272–291 (YLLLFHSLFNPMLNPLICSL). The Cytoplasmic segment spans residues 292–310 (RNSEVKNTLKRVLGVERAL).

It belongs to the G-protein coupled receptor 1 family.

Its subcellular location is the cell membrane. In terms of biological role, odorant receptor. The polypeptide is Olfactory receptor 2A7 (OR2A7) (Homo sapiens (Human)).